Consider the following 572-residue polypeptide: Pentatricopeptide repeat-containing protein At5g15010, mitochondrial (572 aa).

The N-terminal 57 residues, 1–57 (MRGIFLIRSRLSIFRAPAVKCLRFSNVLPSLSNNCIVRLYMEPPVACVLPLGLCSMF), are a transit peptide targeting the mitochondrion. 10 PPR repeats span residues 160–194 (SVRE…SPSL), 196–230 (NSQT…KLEM), 231–261 (GIDD…NKDK), 265–300 (DAKS…GVKH), 301–335 (DVVS…CIEP), 336–371 (DRKV…GIEP), 372–406 (NVVT…GLFP), 412–438 (HAFM…GCEP), 439–473 (TVET…TVGP), and 474–508 (DLSS…GMRP).

It belongs to the PPR family. P subfamily.

It is found in the mitochondrion. The polypeptide is Pentatricopeptide repeat-containing protein At5g15010, mitochondrial (Arabidopsis thaliana (Mouse-ear cress)).